Consider the following 220-residue polypeptide: Ribose-5-phosphate isomerase A (220 aa).

Substrate contacts are provided by residues 28 to 31 (TGST), 81 to 84 (DGAD), and 94 to 97 (KGGG). The Proton acceptor role is filled by E103. K121 lines the substrate pocket.

This sequence belongs to the ribose 5-phosphate isomerase family. Homodimer.

It catalyses the reaction aldehydo-D-ribose 5-phosphate = D-ribulose 5-phosphate. It participates in carbohydrate degradation; pentose phosphate pathway; D-ribose 5-phosphate from D-ribulose 5-phosphate (non-oxidative stage): step 1/1. Its function is as follows. Catalyzes the reversible conversion of ribose-5-phosphate to ribulose 5-phosphate. The protein is Ribose-5-phosphate isomerase A of Shewanella baltica (strain OS185).